Reading from the N-terminus, the 287-residue chain is Small ribosomal subunit biogenesis GTPase RsgA (287 aa).

The 158-residue stretch at 61–218 (ISQLKRPAVA…MVDTPGFSSL (158 aa)) folds into the CP-type G domain. Residues 110–113 (NKLD) and 161–169 (GPSGVGKST) each bind GTP. Positions 242, 247, 249, and 255 each coordinate Zn(2+).

It belongs to the TRAFAC class YlqF/YawG GTPase family. RsgA subfamily. In terms of assembly, monomer. Associates with 30S ribosomal subunit, binds 16S rRNA. It depends on Zn(2+) as a cofactor.

It is found in the cytoplasm. In terms of biological role, one of several proteins that assist in the late maturation steps of the functional core of the 30S ribosomal subunit. Helps release RbfA from mature subunits. May play a role in the assembly of ribosomal proteins into the subunit. Circularly permuted GTPase that catalyzes slow GTP hydrolysis, GTPase activity is stimulated by the 30S ribosomal subunit. The protein is Small ribosomal subunit biogenesis GTPase RsgA of Clostridium kluyveri (strain NBRC 12016).